The chain runs to 556 residues: Polypeptide N-acetylgalactosaminyltransferase 13 (556 aa).

Over 1 to 4 (MRRF) the chain is Cytoplasmic. Residues 5-27 (VYCKVVLATSLMWVLVDVFLLLY) form a helical; Signal-anchor for type II membrane protein membrane-spanning segment. Residues 28 to 556 (FSECNKCDDK…WLLRNMTLGT (529 aa)) lie on the Lumenal side of the membrane. N-linked (GlcNAc...) asparagine glycans are attached at residues N94 and N116. Disulfide bonds link C105–C338, C329–C407, C441–C458, C481–C496, and C522–C539. Residues 114-224 (LPNTSVVIVF…LGWLEPLLAR (111 aa)) form a catalytic subdomain A region. Substrate is bound by residues D155 and R185. The Mn(2+) site is built by D208 and H210. Positions 284 to 346 (PVRTPTMAGG…TCSHVGHVFR (63 aa)) are catalytic subdomain B. W315 contributes to the substrate binding site. H343 contributes to the Mn(2+) binding site. 2 residues coordinate substrate: R346 and Y351. The Ricin B-type lectin domain occupies 428-550 (YSLGEIRNVE…GSRSQQWLLR (123 aa)). N-linked (GlcNAc...) asparagine glycosylation is present at N551.

Belongs to the glycosyltransferase 2 family. GalNAc-T subfamily. It depends on Mn(2+) as a cofactor. As to expression, specifically expressed in neuronal cells. Not expressed in glial cells such as astrocytes. Expressed at low level.

The protein localises to the golgi apparatus membrane. The catalysed reaction is L-seryl-[protein] + UDP-N-acetyl-alpha-D-galactosamine = a 3-O-[N-acetyl-alpha-D-galactosaminyl]-L-seryl-[protein] + UDP + H(+). The enzyme catalyses L-threonyl-[protein] + UDP-N-acetyl-alpha-D-galactosamine = a 3-O-[N-acetyl-alpha-D-galactosaminyl]-L-threonyl-[protein] + UDP + H(+). It functions in the pathway protein modification; protein glycosylation. Catalyzes the initial reaction in O-linked oligosaccharide biosynthesis, the transfer of an N-acetyl-D-galactosamine (GalNAc) residue from UDP-GalNAc to a serine or threonine residue on the protein receptor. Generates GalNAc-O-Ser/Thr structure also known as Tn antigen, which itself is immunogenic but also serves as a precursor for the synthesis of different mucin-type O-glycan core structures. Contributes to the synthesis of O-linked glycans on mucins and proteoglycans of the central nervous system. Can glycosylate both unmodified peptides and glycopeptides that already contain an O-linked GalNAc sugar. Transfers GalNAc to Thr-/Ser-rich tandem repeats GTTPSPVPTTSTTSAP of MUC5AC. Transfers GalNAc to three consecutive serine/threonine residues on SDC3 forming a triplet-Tn epitope expressed in Purkinje cells of the developing brain. May promote neurogenesis through glycosylation and stabilization of PDPN. The polypeptide is Polypeptide N-acetylgalactosaminyltransferase 13 (Galnt13) (Mus musculus (Mouse)).